Consider the following 85-residue polypeptide: Small integral membrane protein 2 (85 aa).

A helical membrane pass occupies residues 21–43; it reads GHAISILFGFWTSFICDTYIVLA. Positions 51–85 are disordered; the sequence is SPDVSASSDEPYARIQQSRRQCHAEEDQSQVPEAG.

Its subcellular location is the membrane. In Homo sapiens (Human), this protein is Small integral membrane protein 2 (SMIM2).